Here is a 181-residue protein sequence, read N- to C-terminus: Endoribonuclease YbeY (181 aa).

Positions 140, 144, and 150 each coordinate Zn(2+).

The protein belongs to the endoribonuclease YbeY family. Zn(2+) serves as cofactor.

It localises to the cytoplasm. Single strand-specific metallo-endoribonuclease involved in late-stage 70S ribosome quality control and in maturation of the 3' terminus of the 16S rRNA. In Dinoroseobacter shibae (strain DSM 16493 / NCIMB 14021 / DFL 12), this protein is Endoribonuclease YbeY.